A 1651-amino-acid chain; its full sequence is Vitellogenin-6 (1651 aa).

The N-terminal stretch at 1 to 15 (MKFFIALALLGAALA) is a signal peptide. The region spanning 34–716 (FRAGREYRYL…TTESVLPTEM (683 aa)) is the Vitellogenin domain. Residues Asn252 and Asn1288 are each glycosylated (N-linked (GlcNAc...) asparagine). The region spanning 1340-1515 (ANCVVKSTKI…SYLYKDSKCN (176 aa)) is the VWFD domain. Intrachain disulfides connect Cys1342/Cys1479 and Cys1364/Cys1514. A disordered region spans residues 1527–1556 (FQRIEKNQEEEKDQEMNYEESRREQDDEPT).

Synthesized in Caenorhabditis only by 32 cells building the intestine of adult hermaphroditic individuals; they are cotranslationally secreted into the body cavity and subsequently taken up by the gonad.

It is found in the secreted. Functionally, precursor of the egg-yolk proteins that are sources of nutrients during embryonic development. May play a role in cholesterol uptake. May be involved in thermotolerance. The protein is Vitellogenin-6 (vit-6) of Caenorhabditis elegans.